A 125-amino-acid chain; its full sequence is Glutaredoxin-C1 (125 aa).

Residues 19 to 119 (VNKAKEIVSA…PLLTEAGAIA (101 aa)) enclose the Glutaredoxin domain. Cys39 and Cys42 are disulfide-bonded.

Belongs to the glutaredoxin family. CPYC subfamily.

The protein localises to the cytoplasm. In terms of biological role, has a glutathione-disulfide oxidoreductase activity in the presence of NADPH and glutathione reductase. Reduces low molecular weight disulfides and proteins. In Arabidopsis thaliana (Mouse-ear cress), this protein is Glutaredoxin-C1 (GRXC1).